Consider the following 131-residue polypeptide: UPF0102 protein RALTA_A3032 (131 aa).

Residues 1-12 (MMRSFKSTQEPS) are compositionally biased toward polar residues. A disordered region spans residues 1–21 (MMRSFKSTQEPSRQARGAQAE).

Belongs to the UPF0102 family.

The protein is UPF0102 protein RALTA_A3032 of Cupriavidus taiwanensis (strain DSM 17343 / BCRC 17206 / CCUG 44338 / CIP 107171 / LMG 19424 / R1) (Ralstonia taiwanensis (strain LMG 19424)).